The primary structure comprises 210 residues: MKDPIDLYMNTLVPMVVEQTSRGERAYDIFSRMLKERIIFLSGPVHDGMSSLICAQLLFLEAENPSKEIAMYINSPGGVVTSGLSIYDTMQYIRPKVSTLVIGQAASMGSLLLTAGEKGMRFSLPNSRVMVHQPSGGYQGQATDIMIHARETEKLKRRLNEIYVKHTGQDLDTVEAALERDNFMSAEDAKAWGLIDEILESRGKTDDTAK.

The active-site Nucleophile is the Ser107. His132 is an active-site residue.

The protein belongs to the peptidase S14 family. In terms of assembly, fourteen ClpP subunits assemble into 2 heptameric rings which stack back to back to give a disk-like structure with a central cavity, resembling the structure of eukaryotic proteasomes.

Its subcellular location is the cytoplasm. It carries out the reaction Hydrolysis of proteins to small peptides in the presence of ATP and magnesium. alpha-casein is the usual test substrate. In the absence of ATP, only oligopeptides shorter than five residues are hydrolyzed (such as succinyl-Leu-Tyr-|-NHMec, and Leu-Tyr-Leu-|-Tyr-Trp, in which cleavage of the -Tyr-|-Leu- and -Tyr-|-Trp bonds also occurs).. Functionally, cleaves peptides in various proteins in a process that requires ATP hydrolysis. Has a chymotrypsin-like activity. Plays a major role in the degradation of misfolded proteins. The polypeptide is ATP-dependent Clp protease proteolytic subunit (Cereibacter sphaeroides (strain ATCC 17025 / ATH 2.4.3) (Rhodobacter sphaeroides)).